Here is a 640-residue protein sequence, read N- to C-terminus: Threonine--tRNA ligase (640 aa).

One can recognise a TGS domain in the interval 1–61; it reads MPAITLPDGS…DADARLRFIT (61 aa). Residues 243 to 536 are catalytic; it reads DHRKIGRQMD…LIENCAGRFP (294 aa). Residues Cys-336, His-387, and His-513 each contribute to the Zn(2+) site.

It belongs to the class-II aminoacyl-tRNA synthetase family. In terms of assembly, homodimer. It depends on Zn(2+) as a cofactor.

It localises to the cytoplasm. It carries out the reaction tRNA(Thr) + L-threonine + ATP = L-threonyl-tRNA(Thr) + AMP + diphosphate + H(+). In terms of biological role, catalyzes the attachment of threonine to tRNA(Thr) in a two-step reaction: L-threonine is first activated by ATP to form Thr-AMP and then transferred to the acceptor end of tRNA(Thr). Also edits incorrectly charged L-seryl-tRNA(Thr). The chain is Threonine--tRNA ligase from Acidiphilium cryptum (strain JF-5).